A 70-amino-acid polypeptide reads, in one-letter code: uncharacterized protein (70 aa).

This is an uncharacterized protein from Methanocaldococcus jannaschii (strain ATCC 43067 / DSM 2661 / JAL-1 / JCM 10045 / NBRC 100440) (Methanococcus jannaschii).